Consider the following 396-residue polypeptide: Elongation factor Tu (396 aa).

One can recognise a tr-type G domain in the interval lysine 10–glutamate 206. Residues glycine 19–threonine 26 form a G1 region. Glycine 19 to threonine 26 provides a ligand contact to GTP. Threonine 26 provides a ligand contact to Mg(2+). Residues glycine 60–asparagine 64 are G2. A G3 region spans residues aspartate 81–glycine 84. GTP is bound by residues aspartate 81 to histidine 85 and asparagine 136 to aspartate 139. Residues asparagine 136–aspartate 139 are G4. The interval serine 174–threonine 176 is G5.

This sequence belongs to the TRAFAC class translation factor GTPase superfamily. Classic translation factor GTPase family. EF-Tu/EF-1A subfamily. As to quaternary structure, monomer.

It is found in the cytoplasm. The enzyme catalyses GTP + H2O = GDP + phosphate + H(+). Functionally, GTP hydrolase that promotes the GTP-dependent binding of aminoacyl-tRNA to the A-site of ribosomes during protein biosynthesis. The protein is Elongation factor Tu of Psychrobacter arcticus (strain DSM 17307 / VKM B-2377 / 273-4).